Here is a 210-residue protein sequence, read N- to C-terminus: CLAVATA3/ESR (CLE)-related protein 4D (210 aa).

The signal sequence occupies residues Met-1–Ala-21. Positions Ala-21–Met-83 are required for secretion from the host cytoplasm to the host apoplasm. N-linked (GlcNAc...) asparagine glycosylation is found at Asn-32 and Asn-59. A disordered region spans residues Arg-115 to His-210. Composition is skewed to basic and acidic residues over residues His-125 to Gly-137, Pro-144 to Gly-158, Pro-165 to Val-179, and Pro-186 to Gly-200. One copy of the A-1 repeat lies at Glu-127 to Lys-135. The tract at residues Thr-129–Lys-198 is 4 X approximate repeat A. The stretch at Arg-136 to His-147 is one CLE-1 repeat. Positions Arg-136–His-210 are 4 X approximate repeat CLE. The stretch at Gln-148–Lys-156 is one A-2 repeat. A CLE-2 repeat occupies Arg-157–His-168. One copy of the A-3 repeat lies at Gln-169 to Lys-177. A CLE-3 repeat occupies Arg-178–His-189. The stretch at Gln-190 to Lys-198 is one A-4 repeat. A CLE-4 repeat occupies Arg-199–His-210.

It belongs to the CLV3/ESR signal peptide family. In terms of tissue distribution, highly expressed exclusively within the dorsal esophageal gland cell during syncytium formation in host plants.

The protein localises to the secreted. The protein resides in the host cytoplasm. It localises to the host extracellular space. Its subcellular location is the extracellular space. It is found in the apoplast. In terms of biological role, mimics host plant CLE extracellular signal peptides that regulate cell fate. May play a role in the differentiation or division of feeding cells (syncytia) induced in plant roots during infection. This is CLAVATA3/ESR (CLE)-related protein 4D (CLE-4D) from Globodera rostochiensis (Golden nematode worm).